The chain runs to 253 residues: uncharacterized protein (253 aa).

NADP(+) contacts are provided by I17, S36, D62, N89, Y158, K162, V191, and T193. Catalysis depends on Y158, which acts as the Proton donor. Residue K162 is the Lowers pKa of active site Tyr of the active site.

This sequence belongs to the short-chain dehydrogenases/reductases (SDR) family.

It is found in the cytoplasm. The protein resides in the nucleus. This is an uncharacterized protein from Schizosaccharomyces pombe (strain 972 / ATCC 24843) (Fission yeast).